Here is a 624-residue protein sequence, read N- to C-terminus: UvrABC system protein C (624 aa).

The region spanning 25–104 (AEPGVYFMRD…IKQHQPHFNV (80 aa)) is the GIY-YIG domain. The UVR domain maps to 214 to 249 (SELIDTLTPQMEAAAENLNFEQAARIRDQINGLKTL).

This sequence belongs to the UvrC family. In terms of assembly, interacts with UvrB in an incision complex.

It is found in the cytoplasm. Functionally, the UvrABC repair system catalyzes the recognition and processing of DNA lesions. UvrC both incises the 5' and 3' sides of the lesion. The N-terminal half is responsible for the 3' incision and the C-terminal half is responsible for the 5' incision. The sequence is that of UvrABC system protein C from Cyanothece sp. (strain PCC 7425 / ATCC 29141).